We begin with the raw amino-acid sequence, 182 residues long: ADP-ribosylation factor 1 (182 aa).

The N-myristoyl glycine moiety is linked to residue Gly-2. Residues 24–31, 67–71, and 126–129 each bind GTP; these read GLDAAGKT, DVGGQ, and NKQD.

The protein belongs to the small GTPase superfamily. Arf family.

It localises to the golgi apparatus. It carries out the reaction GTP + H2O = GDP + phosphate + H(+). GTP-binding protein involved in protein trafficking; may modulate vesicle budding and uncoating within the Golgi apparatus. The sequence is that of ADP-ribosylation factor 1 (arfA) from Dictyostelium discoideum (Social amoeba).